The following is a 144-amino-acid chain: Protein SprT-like (144 aa).

Residues 4–143 (NKYVQEVSLQ…GKCRGKLTLK (140 aa)) enclose the SprT-like domain. Histidine 64 lines the Zn(2+) pocket. Glutamate 65 is a catalytic residue. Position 68 (histidine 68) interacts with Zn(2+).

Belongs to the SprT family. It depends on Zn(2+) as a cofactor.

It is found in the cytoplasm. The chain is Protein SprT-like from Streptococcus suis (strain 98HAH33).